A 698-amino-acid chain; its full sequence is Probable Xaa-Pro aminopeptidase P (698 aa).

Aspartate 509, aspartate 520, glutamate 604, and glutamate 618 together coordinate Mn(2+).

This sequence belongs to the peptidase M24B family. Requires Mn(2+) as cofactor.

The catalysed reaction is Release of any N-terminal amino acid, including proline, that is linked to proline, even from a dipeptide or tripeptide.. Its function is as follows. Catalyzes the removal of a penultimate prolyl residue from the N-termini of peptides. This chain is Probable Xaa-Pro aminopeptidase P (AMPP), found in Arthroderma benhamiae (strain ATCC MYA-4681 / CBS 112371) (Trichophyton mentagrophytes).